The sequence spans 245 residues: rRNA adenine N-6-methyltransferase (245 aa).

Residues N10, L12, G37, E58, D83, and S100 each contribute to the S-adenosyl-L-methionine site.

It belongs to the class I-like SAM-binding methyltransferase superfamily. rRNA adenine N(6)-methyltransferase family.

The enzyme catalyses adenosine(2085) in 23S rRNA + 2 S-adenosyl-L-methionine = N(6)-dimethyladenosine(2085) in 23S rRNA + 2 S-adenosyl-L-homocysteine + 2 H(+). Functionally, this protein produces a dimethylation of the adenine residue at position 2085 in 23S rRNA, resulting in reduced affinity between ribosomes and macrolide-lincosamide-streptogramin B antibiotics. The protein is rRNA adenine N-6-methyltransferase of Streptococcus sanguinis.